The sequence spans 201 residues: 3-isopropylmalate dehydratase small subunit (201 aa).

The protein belongs to the LeuD family. LeuD type 1 subfamily. As to quaternary structure, heterodimer of LeuC and LeuD.

It carries out the reaction (2R,3S)-3-isopropylmalate = (2S)-2-isopropylmalate. It participates in amino-acid biosynthesis; L-leucine biosynthesis; L-leucine from 3-methyl-2-oxobutanoate: step 2/4. Its function is as follows. Catalyzes the isomerization between 2-isopropylmalate and 3-isopropylmalate, via the formation of 2-isopropylmaleate. This is 3-isopropylmalate dehydratase small subunit from Shigella flexneri serotype 5b (strain 8401).